The chain runs to 296 residues: Diaminopimelate epimerase (296 aa).

Residues Asn17, Gln49, and Asn69 each contribute to the substrate site. Catalysis depends on Cys78, which acts as the Proton donor. Substrate-binding positions include 79–80, Asn171, Asn205, and 223–224; these read GN and ER. Cys232 (proton acceptor) is an active-site residue. 233–234 contacts substrate; it reads GT.

The protein belongs to the diaminopimelate epimerase family. Homodimer.

It localises to the cytoplasm. It catalyses the reaction (2S,6S)-2,6-diaminopimelate = meso-2,6-diaminopimelate. It functions in the pathway amino-acid biosynthesis; L-lysine biosynthesis via DAP pathway; DL-2,6-diaminopimelate from LL-2,6-diaminopimelate: step 1/1. In terms of biological role, catalyzes the stereoinversion of LL-2,6-diaminopimelate (L,L-DAP) to meso-diaminopimelate (meso-DAP), a precursor of L-lysine and an essential component of the bacterial peptidoglycan. The sequence is that of Diaminopimelate epimerase from Methylorubrum extorquens (strain PA1) (Methylobacterium extorquens).